A 420-amino-acid polypeptide reads, in one-letter code: D-tagatose-1,6-bisphosphate aldolase subunit GatZ (420 aa).

This sequence belongs to the GatZ/KbaZ family. GatZ subfamily. As to quaternary structure, forms a complex with GatY.

It functions in the pathway carbohydrate metabolism; D-tagatose 6-phosphate degradation; D-glyceraldehyde 3-phosphate and glycerone phosphate from D-tagatose 6-phosphate: step 2/2. Functionally, component of the tagatose-1,6-bisphosphate aldolase GatYZ that is required for full activity and stability of the Y subunit. Could have a chaperone-like function for the proper and stable folding of GatY. When expressed alone, GatZ does not show any aldolase activity. Is involved in the catabolism of galactitol. The sequence is that of D-tagatose-1,6-bisphosphate aldolase subunit GatZ from Shigella flexneri serotype 5b (strain 8401).